We begin with the raw amino-acid sequence, 962 residues long: Protease 3 (962 aa).

The first 23 residues, methionine 1–alanine 23, serve as a signal peptide directing secretion. Histidine 88 contacts Zn(2+). Catalysis depends on glutamate 91, which acts as the Proton acceptor. 2 residues coordinate Zn(2+): histidine 92 and glutamate 169.

It belongs to the peptidase M16 family. As to quaternary structure, monomer. Requires Zn(2+) as cofactor.

Its subcellular location is the periplasm. The enzyme catalyses Preferential cleavage of 16-Tyr-|-Leu-17 and 25-Phe-|-Tyr-26 bonds of oxidized insulin B chain. Also acts on other substrates of Mw less than 7 kDa such as insulin and glucagon.. In terms of biological role, endopeptidase that degrades small peptides of less than 7 kDa, such as glucagon and insulin. The protein is Protease 3 (ptrA) of Salmonella typhi.